An 82-amino-acid polypeptide reads, in one-letter code: Cytochrome b559 subunit alpha (82 aa).

A helical membrane pass occupies residues 21-35; it reads VIHSITIPSLFIAGW. His-23 serves as a coordination point for heme.

It belongs to the PsbE/PsbF family. Heterodimer of an alpha subunit and a beta subunit. PSII is composed of 1 copy each of membrane proteins PsbA, PsbB, PsbC, PsbD, PsbE, PsbF, PsbH, PsbI, PsbJ, PsbK, PsbL, PsbM, PsbT, PsbX, PsbY, PsbZ, Psb30/Ycf12, at least 3 peripheral proteins of the oxygen-evolving complex and a large number of cofactors. It forms dimeric complexes. Heme b serves as cofactor.

The protein localises to the plastid. Its subcellular location is the chloroplast thylakoid membrane. This b-type cytochrome is tightly associated with the reaction center of photosystem II (PSII). PSII is a light-driven water:plastoquinone oxidoreductase that uses light energy to abstract electrons from H(2)O, generating O(2) and a proton gradient subsequently used for ATP formation. It consists of a core antenna complex that captures photons, and an electron transfer chain that converts photonic excitation into a charge separation. In Stigeoclonium helveticum (Green alga), this protein is Cytochrome b559 subunit alpha.